The primary structure comprises 932 residues: Serine/threonine-protein kinase PknD (932 aa).

The region spanning 4-291 is the Protein kinase domain; sequence YDIVRIIGKG…ELKEDIESHL (288 aa). Residues 10–18 and Lys-33 contribute to the ATP site; that span reads IGKGGMGEV. Asp-138 serves as the catalytic Proton acceptor.

This sequence belongs to the protein kinase superfamily. Ser/Thr protein kinase family. Autophosphorylated on serine and threonine residues.

The enzyme catalyses L-seryl-[protein] + ATP = O-phospho-L-seryl-[protein] + ADP + H(+). It carries out the reaction L-threonyl-[protein] + ATP = O-phospho-L-threonyl-[protein] + ADP + H(+). In terms of biological role, together with the serine/threonine kinase Pkn1, may play a role in the specific interactions with host proteins during intracellular growth. The chain is Serine/threonine-protein kinase PknD from Chlamydia pneumoniae (Chlamydophila pneumoniae).